The following is a 228-amino-acid chain: Small ribosomal subunit protein uS2 (228 aa).

Belongs to the universal ribosomal protein uS2 family.

In Blochmanniella pennsylvanica (strain BPEN), this protein is Small ribosomal subunit protein uS2.